The following is a 698-amino-acid chain: UvrABC system protein B (698 aa).

Residues 25–183 (NGLNSGLVHQ…TLIDLQFERN (159 aa)) form the Helicase ATP-binding domain. 38–45 (GATGTGKT) contacts ATP. The Beta-hairpin signature appears at 91–114 (YYDAYTPEAYVPSKDLYIEKEAQI). The region spanning 428 to 594 (QIDDLLGEIK…GIVKAVRDLT (167 aa)) is the Helicase C-terminal domain. Positions 622–657 (FKVINALEKQMKQAAKDLEFEKAALLRDQLTEMRQT) constitute a UVR domain.

This sequence belongs to the UvrB family. Forms a heterotetramer with UvrA during the search for lesions. Interacts with UvrC in an incision complex.

Its subcellular location is the cytoplasm. Functionally, the UvrABC repair system catalyzes the recognition and processing of DNA lesions. A damage recognition complex composed of 2 UvrA and 2 UvrB subunits scans DNA for abnormalities. Upon binding of the UvrA(2)B(2) complex to a putative damaged site, the DNA wraps around one UvrB monomer. DNA wrap is dependent on ATP binding by UvrB and probably causes local melting of the DNA helix, facilitating insertion of UvrB beta-hairpin between the DNA strands. Then UvrB probes one DNA strand for the presence of a lesion. If a lesion is found the UvrA subunits dissociate and the UvrB-DNA preincision complex is formed. This complex is subsequently bound by UvrC and the second UvrB is released. If no lesion is found, the DNA wraps around the other UvrB subunit that will check the other stand for damage. This is UvrABC system protein B from Herpetosiphon aurantiacus (strain ATCC 23779 / DSM 785 / 114-95).